The chain runs to 397 residues: Lysophospholipid transporter LplT (397 aa).

Residues 1–17 (MSESVHTNTSLWSKGMK) are Periplasmic-facing. A helical transmembrane segment spans residues 18-38 (AVIVAQFLSAFGDNALLFATL). Topologically, residues 39–52 (ALLKAQFYPEWSQP) are cytoplasmic. A helical membrane pass occupies residues 53 to 73 (ILQMVFVGAYILFAPFVGQVA). Topologically, residues 74–90 (DSFAKGRVMMFANGLKL) are periplasmic. A helical membrane pass occupies residues 91–111 (LGAASICFGINPFLGYTLVGV). At 112–144 (GAAAYSPAKYGILGELTTGSKLVKANGLMEAST) the chain is on the cytoplasmic side. Residues 145-165 (IAAILLGSVAGGVLADWHVLV) traverse the membrane as a helical segment. A topological domain (periplasmic) is located at residue Ala-166. Residues 167–187 (LAACALAYGGAVVANIYIPKL) form a helical membrane-spanning segment. Over 188 to 226 (AAARPGQSWNLINMTRSFLNACTSLWRNGETRFSLVGTS) the chain is Cytoplasmic. The chain crosses the membrane as a helical span at residues 227-247 (LFWGAGVTLRFLLVLWVPVAL). At 248 to 256 (GITDNATPT) the chain is on the periplasmic side. The helical transmembrane segment at 257 to 277 (YLNAMVAIGIVVGAGAAAKLV) threads the bilayer. Residues 278–280 (TLE) are Cytoplasmic-facing. The chain crosses the membrane as a helical span at residues 281–301 (TVSRCMPAGILIGVVVLIFSL). The Periplasmic portion of the chain corresponds to 302 to 304 (QHE). A helical membrane pass occupies residues 305–325 (QLPAYALLMLIGVLGGFFVVP). Over 326–343 (LNALLQERGKKSVGAGNA) the chain is Cytoplasmic. Residues 344 to 364 (IAVQNLGENSAMLLMLGIYSL) form a helical membrane-spanning segment. Residues 365–366 (AV) are Periplasmic-facing. Residues 367–387 (MVGIPVVPIGIGFGALFALAI) form a helical membrane-spanning segment. At 388 to 397 (TALWIWQRRH) the chain is on the cytoplasmic side.

This sequence belongs to the major facilitator superfamily. LplT (TC 2.A.1.42) family.

It localises to the cell inner membrane. In terms of biological role, catalyzes the facilitated diffusion of 2-acyl-glycero-3-phosphoethanolamine (2-acyl-GPE) into the cell. In Escherichia coli O157:H7 (strain EC4115 / EHEC), this protein is Lysophospholipid transporter LplT.